The following is a 462-amino-acid chain: TNF receptor-associated factor family protein DDB_G0267754 (462 aa).

The segment at cysteine 24–arginine 62 adopts an RING-type; degenerate zinc-finger fold. Residues lysine 104 to glutamine 127 are disordered. 2 consecutive TRAF-type zinc fingers follow at residues serine 150–glutamate 217 and serine 214–alanine 273. One can recognise an MATH domain in the interval methionine 326–isoleucine 449.

This sequence belongs to the TNF receptor-associated factor family. A subfamily.

It localises to the cytoplasm. Its function is as follows. Probable adapter protein and signal transducer that links members of the tumor necrosis factor receptor family to different signaling pathways by association with the receptor cytoplasmic domain and kinases. This chain is TNF receptor-associated factor family protein DDB_G0267754, found in Dictyostelium discoideum (Social amoeba).